The following is a 481-amino-acid chain: Aspartyl/glutamyl-tRNA(Asn/Gln) amidotransferase subunit B (481 aa).

The protein belongs to the GatB/GatE family. GatB subfamily. In terms of assembly, heterotrimer of A, B and C subunits.

It catalyses the reaction L-glutamyl-tRNA(Gln) + L-glutamine + ATP + H2O = L-glutaminyl-tRNA(Gln) + L-glutamate + ADP + phosphate + H(+). The catalysed reaction is L-aspartyl-tRNA(Asn) + L-glutamine + ATP + H2O = L-asparaginyl-tRNA(Asn) + L-glutamate + ADP + phosphate + 2 H(+). Allows the formation of correctly charged Asn-tRNA(Asn) or Gln-tRNA(Gln) through the transamidation of misacylated Asp-tRNA(Asn) or Glu-tRNA(Gln) in organisms which lack either or both of asparaginyl-tRNA or glutaminyl-tRNA synthetases. The reaction takes place in the presence of glutamine and ATP through an activated phospho-Asp-tRNA(Asn) or phospho-Glu-tRNA(Gln). The sequence is that of Aspartyl/glutamyl-tRNA(Asn/Gln) amidotransferase subunit B from Pseudomonas putida (strain ATCC 700007 / DSM 6899 / JCM 31910 / BCRC 17059 / LMG 24140 / F1).